Here is a 119-residue protein sequence, read N- to C-terminus: Holo-[acyl-carrier-protein] synthase (119 aa).

Mg(2+) is bound by residues aspartate 7 and glutamate 56.

Belongs to the P-Pant transferase superfamily. AcpS family. Mg(2+) serves as cofactor.

Its subcellular location is the cytoplasm. It carries out the reaction apo-[ACP] + CoA = holo-[ACP] + adenosine 3',5'-bisphosphate + H(+). Its function is as follows. Transfers the 4'-phosphopantetheine moiety from coenzyme A to a Ser of acyl-carrier-protein. The polypeptide is Holo-[acyl-carrier-protein] synthase (Chlamydia trachomatis serovar D (strain ATCC VR-885 / DSM 19411 / UW-3/Cx)).